The following is a 372-amino-acid chain: MWPFAPVPAGAKCRLVETLPENMDFRSDHLTTFECFNEIITLAKKYIYIASFCCNPLSTTRGALIFDKLKEASEKGIKIIVLLDERGKRNLGELQSHCPDINFITVNIDKKNNVGLLLGCFWVSDDERCYVGNASFTGGSIHTIKTLGVYSDYPPLATDLRRRFDTFKAFNSAKNSWLNLCSAACCLPVSTAYHIKNPIGGVFFTDSPEHLLGYSRDLDTDVVIDKLKSAKTSIDIEHLAIVPTTRVDGNSYYWPDIYNSIIEAAINRGVKIRLLVGNWDKNDVYSMATARSLDALCVQNDLSVKVFTIQNNTKLLIVDDEYVHITSANFDGTHYQNHGFVSFNSIDKQLVSEAKKIFERDWVSSHSKSLKI.

Positions 153 to 156 (YPPL) match the YPPL motif. 2 S-palmitoyl cysteine; by host lipidation sites follow: cysteine 185 and cysteine 186. The 28-residue stretch at 307-334 (FTIQNNTKLLIVDDEYVHITSANFDGTH) folds into the PLD phosphodiesterase domain.

This sequence belongs to the orthopoxvirus OPG057 family. As to quaternary structure, interacts with protein OPG190. In terms of processing, palmitoylated. Attachment of the palmitate moiety is essential for correct intracellular targeting and protein function.

It localises to the virion membrane. It is found in the host Golgi apparatus. The protein localises to the host trans-Golgi network. Its subcellular location is the host endoplasmic reticulum membrane. It catalyses the reaction a 1,2-diacyl-sn-glycero-3-phosphocholine + H2O = a 1,2-diacyl-sn-glycero-3-phosphate + choline + H(+). Functionally, major envelope protein that plays a role in the biogenesis of the viral double membrane and in egress of virus from the host cell. Produces the wrapped form of virus that is required for cell-to-cell spread. Acts as a lipase with broad specificity including phospholipase C, phospholipase A, and triacylglycerol lipase activities. In Homo sapiens (Human), this protein is Envelope phospholipase OPG057 (OPG057).